Consider the following 69-residue polypeptide: MSKFLIKLITLYQKWISPLKGQTCRFYPTCSSYSISAYNTYGFFRGTYLTIRRLLKCHPFHPGGFDPLK.

Belongs to the UPF0161 family.

The protein resides in the cell membrane. Could be involved in insertion of integral membrane proteins into the membrane. The chain is Putative membrane protein insertion efficiency factor from Alkaliphilus metalliredigens (strain QYMF).